The primary structure comprises 539 residues: Eukaryotic translation initiation factor 3 subunit L (539 aa).

The PCI domain occupies 302–514; that stretch reads TFSSILLYIQ…IHIADTKVSH (213 aa).

The protein belongs to the eIF-3 subunit L family. As to quaternary structure, component of the eukaryotic translation initiation factor 3 (eIF-3) complex.

It is found in the cytoplasm. Functionally, component of the eukaryotic translation initiation factor 3 (eIF-3) complex, which is involved in protein synthesis of a specialized repertoire of mRNAs and, together with other initiation factors, stimulates binding of mRNA and methionyl-tRNAi to the 40S ribosome. The eIF-3 complex specifically targets and initiates translation of a subset of mRNAs involved in cell proliferation. This is Eukaryotic translation initiation factor 3 subunit L from Anopheles gambiae (African malaria mosquito).